The sequence spans 626 residues: Nuclear RNA export factor 2 (626 aa).

S34 bears the Phosphoserine mark. An RRM domain is found at 124–203; the sequence is WFKVTIPYGI…IFVNHSTAPY (80 aa). LRR repeat units follow at residues 271 to 296, 297 to 320, 321 to 348, and 349 to 376; these read ELLS…EKAP, KVKT…VKGL, KLEE…AIRD, and CFPK…ETMK. Residues 391–541 form the NTF2 domain; it reads LVLQFLQQYY…LCIVNDELFV (151 aa). The TAP-C domain maps to 570–625; that stretch reads QEQQEMVQAFSAQSGMKLEWSQKCLQDNEWNYTRAGQAFTMLQTEGKIPAEAFKQI.

The protein belongs to the NXF family. As to quaternary structure, interacts with NXT1, NXT2, E1B-AP5, the REF proteins and with nucleoporins, Nup62, Nup153 and Nup214. Interacts with LUZP4. In terms of tissue distribution, expressed almost exclusively in testis. Also expressed in several cancers.

The protein resides in the nucleus. It is found in the nucleoplasm. The protein localises to the cytoplasm. Functionally, involved in the export of mRNA from the nucleus to the cytoplasm. The polypeptide is Nuclear RNA export factor 2 (NXF2) (Homo sapiens (Human)).